The primary structure comprises 469 residues: Neuraminidase (469 aa).

Topologically, residues 1 to 6 (MNPNQK) are intravirion. The helical transmembrane segment at 7 to 27 (IITIGSICMVVGIISLILQIG) threads the bilayer. The tract at residues 11–33 (GSICMVVGIISLILQIGNIISIW) is involved in apical transport and lipid raft association. Topologically, residues 28–469 (NIISIWISHS…GAELPFTIDK (442 aa)) are virion surface. The tract at residues 36–90 (HSIQTGSQNHTGICNQSIITYKNSTWVNQTYVNISNTNVVAGKGTTPVILAGNSS) is hypervariable stalk region. 6 N-linked (GlcNAc...) asparagine; by host glycosylation sites follow: Asn44, Asn50, Asn58, Asn63, Asn68, and Asn88. The tract at residues 91-469 (LCPIRGWAIY…GAELPFTIDK (379 aa)) is head of neuraminidase. Disulfide bonds link Cys92-Cys417, Cys124-Cys129, Cys184-Cys231, Cys233-Cys238, Cys279-Cys292, Cys281-Cys290, Cys318-Cys335, and Cys421-Cys446. A substrate-binding site is contributed by Arg118. An N-linked (GlcNAc...) asparagine; by host glycan is attached at Asn146. Asp151 functions as the Proton donor/acceptor in the catalytic mechanism. Residue Arg152 participates in substrate binding. The N-linked (GlcNAc...) asparagine; by host glycan is linked to Asn235. 277 to 278 (EE) provides a ligand contact to substrate. Arg293 is a binding site for substrate. Asp294, Gly298, Asp324, and Asn344 together coordinate Ca(2+). Residue Asn365 is glycosylated (N-linked (GlcNAc...) asparagine; by host). Substrate is bound at residue Arg368. The Nucleophile role is filled by Tyr402.

It belongs to the glycosyl hydrolase 34 family. In terms of assembly, homotetramer. Ca(2+) serves as cofactor. In terms of processing, N-glycosylated.

The protein resides in the virion membrane. The protein localises to the host apical cell membrane. The enzyme catalyses Hydrolysis of alpha-(2-&gt;3)-, alpha-(2-&gt;6)-, alpha-(2-&gt;8)- glycosidic linkages of terminal sialic acid residues in oligosaccharides, glycoproteins, glycolipids, colominic acid and synthetic substrates.. Inhibited by the neuraminidase inhibitors zanamivir (Relenza) and oseltamivir (Tamiflu). These drugs interfere with the release of progeny virus from infected cells and are effective against all influenza strains. Resistance to neuraminidase inhibitors is quite rare. Its function is as follows. Catalyzes the removal of terminal sialic acid residues from viral and cellular glycoconjugates. Cleaves off the terminal sialic acids on the glycosylated HA during virus budding to facilitate virus release. Additionally helps virus spread through the circulation by further removing sialic acids from the cell surface. These cleavages prevent self-aggregation and ensure the efficient spread of the progeny virus from cell to cell. Otherwise, infection would be limited to one round of replication. Described as a receptor-destroying enzyme because it cleaves a terminal sialic acid from the cellular receptors. May facilitate viral invasion of the upper airways by cleaving the sialic acid moieties on the mucin of the airway epithelial cells. Likely to plays a role in the budding process through its association with lipid rafts during intracellular transport. May additionally display a raft-association independent effect on budding. Plays a role in the determination of host range restriction on replication and virulence. Sialidase activity in late endosome/lysosome traffic seems to enhance virus replication. This Influenza A virus (strain A/USA:Huston/AA/1945 H1N1) protein is Neuraminidase.